We begin with the raw amino-acid sequence, 151 residues long: Type 4 adapter protein IcmW (151 aa).

The T4BSS is a complex nanomachine composed of several subcomplexes. This subunit is part of the Type IV Coupling Complex (T4CC), a subcomplex composed of the DotLMNYZ core and the IcmSW-LvgA adapter subunits, linked by the C-terminal tail of DotL. Interacts with IcmS. IcmS and IcmW form a stable complex. Interaction with IcmS greatly enhances the stability of IcmW. Interacts directly with the type 4 coupling protein DotL. Interacts with LvgA. Interacts with effector proteins.

The protein localises to the cytoplasm. Its activity is regulated as follows. Interaction with DotL is critical for the export of IcmSW-dependent substrates. Functionally, component of the Dot/Icm type IVB secretion system (T4BSS), which is used to inject bacterial effector proteins into eukaryotic host cells. Part of a subcomplex which recruits effector proteins and delivers them to the core transmembrane subcomplex. The IcmS/IcmW protein complex plays an important role in protein translocation by interacting with multiple Dot/Icm effector proteins to facilitate their translocation into host cells. Interaction promotes conformational changes in the effector protein, which may facilitate display of a C-terminal translocation signal. May maintain the substrates in a translocation competent form. Required for intracellular growth in host cells, replicative phagosome formation and phagosome trafficking. The protein is Type 4 adapter protein IcmW of Legionella pneumophila subsp. pneumophila (strain Philadelphia 1 / ATCC 33152 / DSM 7513).